Here is an 826-residue protein sequence, read N- to C-terminus: MSLRSLLITTEAVGETTQTSDHQTSFSTRTYNEINDRPSLRVEKDGEKAYCFKNLDPVRYDTRMGEYPFDYGGQSTENNQLQFDLFTKDLMADTDIGLSDDVRDDLKRQIKEYYQQGYRAIFLIRPQNQEQQYIASYSSTNLNFTSQLSVGVNLSVLNKIQENKLHIYSTQPHIPSVGCEMITKIFRTDVDNENSLINYSVPVTVTISVTKATFEDTFVWNQNNDYPNMNYKDLIPAVTKNSIYHDVKRITKIHEYINSKKKKNGVGKIGGIQIAESKDGFWKILTKNYQIKLKFGIEGYGVMGGTFGNWLIDSGFKTVETNYEYQRNGKTINATTVASVKPSRKCGTRSPVFGQLQFSGEMMVLSHNDILTVFYTEREWALSNAIYAKNFATDFKRQFEVTAQSDELLVRTNVVPHTIKNTPGKALMEYSHGGFGQIDTSDYTGMALTFRFRCVSEDLPEGYYDKDKALTFANVGLTSFQDRQETNGTYWVYNTSTVGFGSCYPKKEFEYDINVTYTTLLPSDPEFTTGGTNYAQSVTAVLEESFINLQNQVNEMLTRMNISDLTSGVMSVFSVATSFPQILDGISDLLKAASSAFKKVKGKVGNVAKRLRGKRYVRLFDEDISIEETPRFLDSIRSSRRPSILSNMFNDDETFTALHTLASRTNSVASDVTYIQPIITTRIANSTPPVIAPASSVTYAKLKDISKIINAEIDPKSIMEFNQVSNTISILDSTKKLAQYAVDPDVIDGILNKMVGGHARSLFSLKVRKHLLDAVEKDAFVKYNYHDLMGKLLNDRELLDITNNLSSQKQFELAKEFRDLLINALA.

This sequence belongs to the rotavirus VP4 family. Homotrimer. VP4 adopts a dimeric appearance above the capsid surface, while forming a trimeric base anchored inside the capsid layer. Only hints of the third molecule are observed above the capsid surface. It probably performs a series of molecular rearrangements during viral entry. Prior to trypsin cleavage, it is flexible. The priming trypsin cleavage triggers its rearrangement into rigid spikes with approximate two-fold symmetry of their protruding parts. After an unknown second triggering event, cleaved VP4 may undergo another rearrangement, in which two VP5* subunits fold back on themselves and join a third subunit to form a tightly associated trimer, shaped like a folded umbrella. Interacts with VP6. Interacts with VP7. As to quaternary structure, homotrimer. The trimer is coiled-coil stabilized by its C-terminus, however, its N-terminus, known as antigen domain or 'body', seems to be flexible allowing it to self-associate either as a dimer or a trimer. Proteolytic cleavage by trypsin results in activation of VP4 functions and greatly increases infectivity. The penetration into the host cell is dependent on trypsin treatment of VP4. It produces two peptides, VP5* and VP8* that remain associated with the virion. Cleavage of VP4 by trypsin probably occurs in vivo in the lumen of the intestine prior to infection of enterocytes. Trypsin seems to be incorporated into the three-layered viral particles but remains inactive as long as the viral outer capsid is intact and would only be activated upon the solubilization of the latter.

It localises to the virion. It is found in the host rough endoplasmic reticulum. The protein resides in the host cell membrane. The protein localises to the host endoplasmic reticulum-Golgi intermediate compartment. In terms of biological role, spike-forming protein that mediates virion attachment to the host epithelial cell receptors and plays a major role in cell penetration, determination of host range restriction and virulence. Rotavirus attachment and entry into the host cell probably involves multiple sequential contacts between the outer capsid proteins VP4 and VP7, and the cell receptors. It is subsequently lost, together with VP7, following virus entry into the host cell. Following entry into the host cell, low intracellular or intravesicular Ca(2+) concentration probably causes the calcium-stabilized VP7 trimers to dissociate from the virion. This step is probably necessary for the membrane-disrupting entry step and the release of VP4, which is locked onto the virion by VP7. Its function is as follows. Forms the spike 'foot' and 'body' and acts as a membrane permeabilization protein that mediates release of viral particles from endosomal compartments into the cytoplasm. During entry, the part of VP5* that protrudes from the virus folds back on itself and reorganizes from a local dimer to a trimer. This reorganization may be linked to membrane penetration. Forms the head of the spikes and mediates the recognition of specific host cell surface glycans. It is the viral hemagglutinin and an important target of neutralizing antibodies. The protein is Outer capsid protein VP4 of Rotavirus X (isolate RVX/Human/Bangladesh/NADRV-B219/2002/GXP[X]) (RV ADRV-N).